A 356-amino-acid chain; its full sequence is tRNA N6-adenosine threonylcarbamoyltransferase (356 aa).

The a divalent metal cation site is built by His-124, His-128, and Tyr-145. Residues 145–149 (YVSGG), Asp-177, Gly-192, Glu-196, and Asn-287 each bind substrate. Asp-315 is a binding site for a divalent metal cation.

It belongs to the KAE1 / TsaD family. Component of the EKC/KEOPS complex composed of at least BUD32, CGI121, GON7, KAE1 and PCC1; the whole complex dimerizes. A divalent metal cation serves as cofactor.

The protein resides in the cytoplasm. Its subcellular location is the nucleus. The catalysed reaction is L-threonylcarbamoyladenylate + adenosine(37) in tRNA = N(6)-L-threonylcarbamoyladenosine(37) in tRNA + AMP + H(+). Its function is as follows. Component of the EKC/KEOPS complex that is required for the formation of a threonylcarbamoyl group on adenosine at position 37 (t(6)A37) in tRNAs that read codons beginning with adenine. The complex is probably involved in the transfer of the threonylcarbamoyl moiety of threonylcarbamoyl-AMP (TC-AMP) to the N6 group of A37. KAE1 likely plays a direct catalytic role in this reaction, but requires other protein(s) of the complex to fulfill this activity. The EKC/KEOPS complex also promotes both telomere uncapping and telomere elongation. The complex is required for efficient recruitment of transcriptional coactivators. The polypeptide is tRNA N6-adenosine threonylcarbamoyltransferase (Yarrowia lipolytica (strain CLIB 122 / E 150) (Yeast)).